Reading from the N-terminus, the 721-residue chain is 1,4-alpha-glucan branching enzyme GlgB (721 aa).

The active-site Nucleophile is aspartate 404. The active-site Proton donor is the glutamate 457.

This sequence belongs to the glycosyl hydrolase 13 family. GlgB subfamily. Monomer.

The enzyme catalyses Transfers a segment of a (1-&gt;4)-alpha-D-glucan chain to a primary hydroxy group in a similar glucan chain.. Its pathway is glycan biosynthesis; glycogen biosynthesis. In terms of biological role, catalyzes the formation of the alpha-1,6-glucosidic linkages in glycogen by scission of a 1,4-alpha-linked oligosaccharide from growing alpha-1,4-glucan chains and the subsequent attachment of the oligosaccharide to the alpha-1,6 position. In Bradyrhizobium diazoefficiens (strain JCM 10833 / BCRC 13528 / IAM 13628 / NBRC 14792 / USDA 110), this protein is 1,4-alpha-glucan branching enzyme GlgB.